A 259-amino-acid polypeptide reads, in one-letter code: Ribosomal RNA small subunit methyltransferase A (259 aa).

Positions 13, 15, 40, 61, 85, and 103 each coordinate S-adenosyl-L-methionine.

The protein belongs to the class I-like SAM-binding methyltransferase superfamily. rRNA adenine N(6)-methyltransferase family. RsmA subfamily.

Its subcellular location is the cytoplasm. The catalysed reaction is adenosine(1518)/adenosine(1519) in 16S rRNA + 4 S-adenosyl-L-methionine = N(6)-dimethyladenosine(1518)/N(6)-dimethyladenosine(1519) in 16S rRNA + 4 S-adenosyl-L-homocysteine + 4 H(+). In terms of biological role, specifically dimethylates two adjacent adenosines (A1518 and A1519) in the loop of a conserved hairpin near the 3'-end of 16S rRNA in the 30S particle. May play a critical role in biogenesis of 30S subunits. The chain is Ribosomal RNA small subunit methyltransferase A from Neisseria meningitidis serogroup A / serotype 4A (strain DSM 15465 / Z2491).